A 521-amino-acid polypeptide reads, in one-letter code: 2,3-bisphosphoglycerate-independent phosphoglycerate mutase (521 aa).

D18 and S68 together coordinate Mn(2+). S68 functions as the Phosphoserine intermediate in the catalytic mechanism. Residues H129, 158–159, R190, R196, 266–269, and K343 each bind substrate; these read RD and RSDR. D410, H414, D451, H452, and H470 together coordinate Mn(2+).

It belongs to the BPG-independent phosphoglycerate mutase family. In terms of assembly, monomer. It depends on Mn(2+) as a cofactor.

The enzyme catalyses (2R)-2-phosphoglycerate = (2R)-3-phosphoglycerate. It participates in carbohydrate degradation; glycolysis; pyruvate from D-glyceraldehyde 3-phosphate: step 3/5. Functionally, catalyzes the interconversion of 2-phosphoglycerate and 3-phosphoglycerate. In Hydrogenovibrio crunogenus (strain DSM 25203 / XCL-2) (Thiomicrospira crunogena), this protein is 2,3-bisphosphoglycerate-independent phosphoglycerate mutase.